We begin with the raw amino-acid sequence, 210 residues long: MLLCDIGNTYLHFYQEGKVWKELPRRLKAGMEVQEVYYISVNPPSARRLLEVYPHAIDLAPHMVLDTAYKGLGVDRMAACKGIEDGVVVDAGSAITVDVMQNQVHLGGFIMPGIASFSSMLKSISPALEKELNLSVELSALPQNTRDALSYGAIKAIVMMIQNSCKNKRLFFTGGDGKYLARFFENAIHDNSIVFKGMLKTLEEMKEGKR.

5-12 (DIGNTYLH) contacts ATP. Residues tyrosine 69 and 73–76 (GVDR) contribute to the substrate site. Catalysis depends on aspartate 75, which acts as the Proton acceptor. Aspartate 90 contacts K(+). Serine 93 is an ATP binding site. Threonine 145 contacts substrate.

It belongs to the type III pantothenate kinase family. As to quaternary structure, homodimer. NH4(+) serves as cofactor. It depends on K(+) as a cofactor.

The protein localises to the cytoplasm. The enzyme catalyses (R)-pantothenate + ATP = (R)-4'-phosphopantothenate + ADP + H(+). It participates in cofactor biosynthesis; coenzyme A biosynthesis; CoA from (R)-pantothenate: step 1/5. Functionally, catalyzes the phosphorylation of pantothenate (Pan), the first step in CoA biosynthesis. In Wolinella succinogenes (strain ATCC 29543 / DSM 1740 / CCUG 13145 / JCM 31913 / LMG 7466 / NCTC 11488 / FDC 602W) (Vibrio succinogenes), this protein is Type III pantothenate kinase.